Consider the following 158-residue polypeptide: Endoribonuclease YbeY (158 aa).

Zn(2+) contacts are provided by His-118, His-122, and His-128.

Belongs to the endoribonuclease YbeY family. Requires Zn(2+) as cofactor.

It localises to the cytoplasm. Single strand-specific metallo-endoribonuclease involved in late-stage 70S ribosome quality control and in maturation of the 3' terminus of the 16S rRNA. This Haemophilus ducreyi (strain 35000HP / ATCC 700724) protein is Endoribonuclease YbeY.